A 188-amino-acid chain; its full sequence is Accessory gene regulator protein B (188 aa).

The next 4 helical transmembrane spans lie at 49–69 (VALI…YFLV), 100–122 (VYFQ…LIIY), 143–163 (LLSI…PEPF), and 164–184 (KQLI…IFFP).

This sequence belongs to the AgrB family.

The protein resides in the cell membrane. Functionally, essential for the production of a quorum sensing system signal molecule, the autoinducing peptide (AIP). This quorum sensing system is responsible for the regulation of the expression of virulence factor genes. Involved in the proteolytic processing of AgrD, the precursor of AIP. This chain is Accessory gene regulator protein B, found in Staphylococcus haemolyticus (strain JCSC1435).